Here is a 176-residue protein sequence, read N- to C-terminus: Nascent polypeptide-associated complex subunit alpha (176 aa).

The 65-residue stretch at 16-80 folds into the NAC-A/B domain; the sequence is PKNEKKAREL…AKVDDMNQRI (65 aa). The tract at residues 83 to 110 is disordered; it reads AQAAQAAETDAHAGHTHSHGEEDKSPEA. Positions 91–110 are enriched in basic and acidic residues; sequence TDAHAGHTHSHGEEDKSPEA. The UBA domain maps to 138–175; the sequence is LDAKDIDIIVEQTQVSRAKAVKALRKHDGDMVNAIMEL.

Belongs to the NAC-alpha family. In terms of assembly, part of the nascent polypeptide-associated complex (NAC), consisting of EGD2 and EGD1. NAC associates with ribosomes via EGD1.

The protein localises to the cytoplasm. It localises to the nucleus. Its function is as follows. Component of the nascent polypeptide-associated complex (NAC), a dynamic component of the ribosomal exit tunnel, protecting the emerging polypeptides from interaction with other cytoplasmic proteins to ensure appropriate nascent protein targeting. The NAC complex also promotes mitochondrial protein import by enhancing productive ribosome interactions with the outer mitochondrial membrane and blocks the inappropriate interaction of ribosomes translating non-secretory nascent polypeptides with translocation sites in the membrane of the endoplasmic reticulum. EGD2 may also be involved in transcription regulation. This chain is Nascent polypeptide-associated complex subunit alpha (EGD2), found in Scheffersomyces stipitis (strain ATCC 58785 / CBS 6054 / NBRC 10063 / NRRL Y-11545) (Yeast).